The chain runs to 241 residues: Orotidine 5'-phosphate decarboxylase (241 aa).

Residues Asp-16, Lys-37, 64–73 (DLKFHDIPTT), Thr-128, Arg-190, Gln-199, Gly-219, and Arg-220 contribute to the substrate site. The Proton donor role is filled by Lys-66.

The protein belongs to the OMP decarboxylase family. Type 1 subfamily. In terms of assembly, homodimer.

It carries out the reaction orotidine 5'-phosphate + H(+) = UMP + CO2. Its pathway is pyrimidine metabolism; UMP biosynthesis via de novo pathway; UMP from orotate: step 2/2. Its function is as follows. Catalyzes the decarboxylation of orotidine 5'-monophosphate (OMP) to uridine 5'-monophosphate (UMP). This chain is Orotidine 5'-phosphate decarboxylase, found in Prochlorococcus marinus (strain NATL2A).